The chain runs to 642 residues: Aryl hydrocarbon receptor nuclear translocator homolog (642 aa).

Residues 13 to 66 (ASRENHCEIERRRRNKMTAYITELSDMVPTCSALARKPDKLTILRMAVAHMKAL) enclose the bHLH domain. PAS domains lie at 85–156 (DQEL…ESQN) and 271–341 (TAAN…LKQK). Residues 346 to 389 (SLLYRARAKNSEYVWLRTQAYAFLNPYTDEVEYIVCTNSSGKTM) form the PAC domain. The disordered stretch occupies residues 450–612 (QAPTPQQQQQ…GPAGAGQPQG (163 aa)). Polar residues-rich tracts occupy residues 463-482 (RPGS…THSP) and 528-554 (YQYQ…NGNR). Residues 555–564 (QQAQPGAYQA) show a composition bias toward low complexity.

As to quaternary structure, efficient DNA binding requires dimerization with another bHLH protein. Heterodimer with ahr, trh or sim. At stage 11, expression is detected in tracheal pits. At later stages, strong expression is also detected in the CNS.

It is found in the nucleus. In terms of biological role, heterodimers of tgo/trh are involved in the control of breathless expression. Plays a role in the cellular or tissue response to oxygen deprivation. The protein is Aryl hydrocarbon receptor nuclear translocator homolog (tgo) of Drosophila melanogaster (Fruit fly).